Here is a 294-residue protein sequence, read N- to C-terminus: tRNA dimethylallyltransferase (294 aa).

10–17 (GPTAVGKT) serves as a coordination point for ATP. Residue 12–17 (TAVGKT) coordinates substrate. The segment at 35–38 (DSQQ) is interaction with substrate tRNA.

It belongs to the IPP transferase family. As to quaternary structure, monomer. Requires Mg(2+) as cofactor.

It catalyses the reaction adenosine(37) in tRNA + dimethylallyl diphosphate = N(6)-dimethylallyladenosine(37) in tRNA + diphosphate. In terms of biological role, catalyzes the transfer of a dimethylallyl group onto the adenine at position 37 in tRNAs that read codons beginning with uridine, leading to the formation of N6-(dimethylallyl)adenosine (i(6)A). This chain is tRNA dimethylallyltransferase, found in Streptococcus sanguinis (strain SK36).